Reading from the N-terminus, the 189-residue chain is Large ribosomal subunit protein bL17 (189 aa).

The segment at 126-189 (DRARRVKASQ…DADADEAPQN (64 aa)) is disordered. Low complexity predominate over residues 139–180 (QDAPSEPQAAEEPAAEEAVAATEAVAAPADAEATDAEAGSAD).

Belongs to the bacterial ribosomal protein bL17 family. As to quaternary structure, part of the 50S ribosomal subunit. Contacts protein L32.

This is Large ribosomal subunit protein bL17 from Mycobacterium marinum (strain ATCC BAA-535 / M).